Here is a 535-residue protein sequence, read N- to C-terminus: Protein PyrBI (535 aa).

The interval 1–341 is aspartate carbamoyltransferase; it reads MENKFMGRSL…MIAGKIGDDY (341 aa). Positions 342-370 are linker; sequence KGPEPKSCERVEDEDYIVEVPINNSKESK. An aspartate carbamoyltransferase regulatory region region spans residues 371 to 535; that stretch reads VETFSEGVRP…FKEIWGEKKN (165 aa). Zn(2+)-binding residues include C488, C493, C517, and C520.

In the N-terminal section; belongs to the aspartate/ornithine carbamoyltransferase superfamily. ATCase family. The protein in the C-terminal section; belongs to the PyrI family.

The catalysed reaction is carbamoyl phosphate + L-aspartate = N-carbamoyl-L-aspartate + phosphate + H(+). Its pathway is pyrimidine metabolism; UMP biosynthesis via de novo pathway; (S)-dihydroorotate from bicarbonate: step 2/3. The protein is Protein PyrBI (pyrBI) of Treponema denticola (strain ATCC 35405 / DSM 14222 / CIP 103919 / JCM 8153 / KCTC 15104).